The primary structure comprises 390 residues: 23S rRNA (uracil(747)-C(5))-methyltransferase RlmC (390 aa).

[4Fe-4S] cluster-binding residues include C12, C20, C23, and C100. Positions 225, 254, 275, and 322 each coordinate S-adenosyl-L-methionine. C349 (nucleophile) is an active-site residue.

This sequence belongs to the class I-like SAM-binding methyltransferase superfamily. RNA M5U methyltransferase family. RlmC subfamily.

It catalyses the reaction uridine(747) in 23S rRNA + S-adenosyl-L-methionine = 5-methyluridine(747) in 23S rRNA + S-adenosyl-L-homocysteine + H(+). Its function is as follows. Catalyzes the formation of 5-methyl-uridine at position 747 (m5U747) in 23S rRNA. The sequence is that of 23S rRNA (uracil(747)-C(5))-methyltransferase RlmC from Shewanella baltica (strain OS185).